The following is a 271-amino-acid chain: Energy-coupling factor transporter ATP-binding protein EcfA (271 aa).

Residues 2–231 (ISIQNLTFYY…PLFLQQYKLT (230 aa)) enclose the ABC transporter domain. 34 to 41 (GHNGSGKS) provides a ligand contact to ATP.

This sequence belongs to the ABC transporter superfamily. Energy-coupling factor EcfA family. As to quaternary structure, forms a stable energy-coupling factor (ECF) transporter complex composed of 2 membrane-embedded substrate-binding proteins (S component), 2 ATP-binding proteins (A component) and 2 transmembrane proteins (T component).

The protein resides in the cell membrane. In terms of biological role, ATP-binding (A) component of a common energy-coupling factor (ECF) ABC-transporter complex. Unlike classic ABC transporters this ECF transporter provides the energy necessary to transport a number of different substrates. The protein is Energy-coupling factor transporter ATP-binding protein EcfA of Aster yellows witches'-broom phytoplasma (strain AYWB).